Here is a 302-residue protein sequence, read N- to C-terminus: Acetylglutamate kinase (302 aa).

Substrate is bound by residues 73–74 (GG), Arg95, and Asn200.

Belongs to the acetylglutamate kinase family. ArgB subfamily.

The protein resides in the cytoplasm. It catalyses the reaction N-acetyl-L-glutamate + ATP = N-acetyl-L-glutamyl 5-phosphate + ADP. Its pathway is amino-acid biosynthesis; L-arginine biosynthesis; N(2)-acetyl-L-ornithine from L-glutamate: step 2/4. Functionally, catalyzes the ATP-dependent phosphorylation of N-acetyl-L-glutamate. The protein is Acetylglutamate kinase of Sphingopyxis alaskensis (strain DSM 13593 / LMG 18877 / RB2256) (Sphingomonas alaskensis).